Consider the following 189-residue polypeptide: GTPase HRas (189 aa).

Residue M1 is modified to N-acetylmethionine. T2 carries the post-translational modification N-acetylthreonine; in GTPase HRas, N-terminally processed. GTP is bound at residue G10 to S17. Positions Y32–Y40 match the Effector region motif. GTP contacts are provided by residues D57 to Q61 and N116 to D119. C118 bears the S-nitrosocysteine mark. A hypervariable region region spans residues H166–K185. Residues C181 and C184 are each lipidated (S-palmitoyl cysteine). At C186 the chain carries Cysteine methyl ester. Residue C186 is the site of S-farnesyl cysteine attachment. Positions V187–S189 are cleaved as a propeptide — removed in mature form.

Belongs to the small GTPase superfamily. Ras family. In terms of processing, palmitoylated by the ZDHHC9-GOLGA7 complex. A continuous cycle of de- and re-palmitoylation regulates rapid exchange between plasma membrane and Golgi.

It is found in the cell membrane. The protein localises to the golgi apparatus membrane. It carries out the reaction GTP + H2O = GDP + phosphate + H(+). Alternates between an inactive form bound to GDP and an active form bound to GTP. Activated by a guanine nucleotide-exchange factor (GEF) and inactivated by a GTPase-activating protein (GAP). Its function is as follows. Ras proteins bind GDP/GTP and possess intrinsic GTPase activity. The protein is GTPase HRas (HRAS) of Gallus gallus (Chicken).